A 321-amino-acid chain; its full sequence is p-hydroxybenzoic acid efflux pump subunit AaeA (321 aa).

A helical transmembrane segment spans residues 22 to 42; that stretch reads VVITLVIVLCAIVAIFRVWAF.

The protein belongs to the membrane fusion protein (MFP) (TC 8.A.1) family.

The protein resides in the cell inner membrane. Forms an efflux pump with AaeB. The protein is p-hydroxybenzoic acid efflux pump subunit AaeA of Pectobacterium atrosepticum (strain SCRI 1043 / ATCC BAA-672) (Erwinia carotovora subsp. atroseptica).